We begin with the raw amino-acid sequence, 182 residues long: MENLTNIFLFLSNENEGIQLNTDIFEANIINLALLIVLVINVAKDVLGSILSARKASILDKIEEADKKLNEADKRFTEARLQWSQANIFGEDLEKKTYQRINAFHESQNLKNKDALLREYFSTLVVLDLKNEQVQKQVRNYVMELALIEVYGVFTKLVANKKFQENYSNYSVLLLEKLIGEK.

Residues 29 to 47 form a helical membrane-spanning segment; that stretch reads IINLALLIVLVINVAKDVL.

This sequence belongs to the ATPase B chain family. F-type ATPases have 2 components, F(1) - the catalytic core - and F(0) - the membrane proton channel. F(1) has five subunits: alpha(3), beta(3), gamma(1), delta(1), epsilon(1). F(0) has four main subunits: a(1), b(1), b'(1) and c(10-14). The alpha and beta chains form an alternating ring which encloses part of the gamma chain. F(1) is attached to F(0) by a central stalk formed by the gamma and epsilon chains, while a peripheral stalk is formed by the delta, b and b' chains.

It localises to the plastid. The protein resides in the chloroplast thylakoid membrane. Functionally, f(1)F(0) ATP synthase produces ATP from ADP in the presence of a proton or sodium gradient. F-type ATPases consist of two structural domains, F(1) containing the extramembraneous catalytic core and F(0) containing the membrane proton channel, linked together by a central stalk and a peripheral stalk. During catalysis, ATP synthesis in the catalytic domain of F(1) is coupled via a rotary mechanism of the central stalk subunits to proton translocation. In terms of biological role, component of the F(0) channel, it forms part of the peripheral stalk, linking F(1) to F(0). The chain is ATP synthase subunit b, chloroplastic from Heterosigma akashiwo (strain NIES-293 / 8280G21-1).